We begin with the raw amino-acid sequence, 685 residues long: Galactocerebrosidase (685 aa).

The N-terminal stretch at 1-42 is a signal peptide; sequence MAEWLLSASWQRRAKAMTAAAGSAGRAAVPLLLCALLAPGGA. Thr-109 provides a ligand contact to substrate. Asn-143 carries N-linked (GlcNAc...) asparagine glycosylation. Residues Trp-151 and Asn-197 each coordinate substrate. The active-site Proton donor/acceptor is Glu-198. Glu-274 serves as the catalytic Nucleophile. A disulfide bridge connects residues Cys-287 and Cys-394. The N-linked (GlcNAc...) asparagine glycan is linked to Asn-379. Residue Arg-396 participates in substrate binding. 4 N-linked (GlcNAc...) asparagine glycosylation sites follow: Asn-403, Asn-556, Asn-559, and Asn-602.

It belongs to the glycosyl hydrolase 59 family. In terms of tissue distribution, detected in urine. Detected in testis, brain and placenta (at protein level). Detected in kidney and liver.

The protein resides in the lysosome. The enzyme catalyses a beta-D-galactosyl-(1&lt;-&gt;1')-N-acylsphing-4-enine + H2O = an N-acylsphing-4-enine + D-galactose. It catalyses the reaction beta-D-galactosyl-(1&lt;-&gt;1)-sphing-4-enine + H2O = sphing-4-enine + D-galactose. It carries out the reaction a D-galactosylceramide + H2O = an N-acyl-sphingoid base + D-galactose. In terms of biological role, hydrolyzes the galactose ester bonds of glycolipids such as galactosylceramide and galactosylsphingosine. Enzyme with very low activity responsible for the lysosomal catabolism of galactosylceramide, a major lipid in myelin, kidney and epithelial cells of small intestine and colon. This Homo sapiens (Human) protein is Galactocerebrosidase.